Reading from the N-terminus, the 495-residue chain is MASGILVNIKEEVTCPICLELLTEPLSLHCGHSFCQACITANHKKSMLYKEGERSCPVCRISYQPENIRPNRHVANIVEKLREVKLSPEEGQKVDHCARHGEKLLLFCQEDRKVICWLCERSQEHRGHHTFLMEEVAQEYHVKLQTALEMLRQKQQEAEKLEADIREEKASWKIQIDCDKTNVLADFEQLREILDWEESNELQNLEKEEEDILKSLTKSETEMVQQTQYMRELISDLEHRLQGSMMELLQGVDGIIKRIENMTLKKPKTFPKNQRRVFRAPDLKGILDMFRELTDVRRYWVDVTLAPNNISHAVIAEDKRQVSSPNPQIMCRARGTLFQSLKNFIYCTGVLGSQSITSGKHYWEVDVSKKSAWILGVCAGFQPDAMYNIEQNENYQPKYGYWVIGLQEGVKYNVFQDGSSHTPFAPFIVPLSVIICPDRVGVFVDYEACTVSFFNITNHGFLIYKFSQCSFSKPVFPYLNPRKCTVPMTLCSPSS.

N-acetylalanine is present on Ala-2. The RING-type zinc-finger motif lies at 15-60; sequence CPICLELLTEPLSLHCGHSFCQACITANHKKSMLYKEGERSCPVCR. Position 87 is a phosphoserine (Ser-87). The segment at 92-133 adopts a B box-type zinc-finger fold; that stretch reads QKVDHCARHGEKLLLFCQEDRKVICWLCERSQEHRGHHTFLM. 4 residues coordinate Zn(2+): Cys-97, His-100, Cys-119, and His-125. Positions 137 to 225 form a coiled coil; the sequence is AQEYHVKLQT…LTKSETEMVQ (89 aa). The required for interaction with GABARAP and for autophagy stretch occupies residues 187 to 200; it reads FEQLREILDWEESN. The 213-residue stretch at 283-495 folds into the B30.2/SPRY domain; it reads LKGILDMFRE…VPMTLCSPSS (213 aa).

It belongs to the TRIM/RBCC family. In terms of assembly, can form homodimers and homotrimers. In addition to lower-order dimerization, also exhibits a higher-order multimerization and both low- and high-order multimerizations are essential for its restriction activity. Interacts with BTBD1 and BTBD2. Interacts with PSMC4, PSMC5, PSMD7 and HSPA8/HSC70. Interacts (via B30.2/SPRY domain) with HSPA1A/B. Interacts with PSMC2, MAP3K7/TAK1, TAB2 and TAB3. Interacts with SQSTM1. Interacts with TRIM6 and TRIM34. Interacts with ULK1 (phosphorylated form), GABARAP, GABARAPL1, GABARAPL2, MAP1LC3A, MAP1LC3C and BECN1. In terms of processing, degraded in a proteasome-independent fashion in the absence of viral infection but in a proteasome-dependent fashion following exposure to restriction sensitive virus. Autoubiquitinated in a RING finger- and UBE2D2-dependent manner. Monoubiquitinated by TRIM21. Deubiquitinated by Yersinia YopJ. Ubiquitination may not lead to proteasomal degradation.

The protein localises to the cytoplasm. It is found in the nucleus. The enzyme catalyses S-ubiquitinyl-[E2 ubiquitin-conjugating enzyme]-L-cysteine + [acceptor protein]-L-lysine = [E2 ubiquitin-conjugating enzyme]-L-cysteine + N(6)-ubiquitinyl-[acceptor protein]-L-lysine.. It participates in protein modification; protein ubiquitination. Its function is as follows. Capsid-specific restriction factor that prevents infection from non-host-adapted retroviruses. Blocks viral replication early in the life cycle, after viral entry but before reverse transcription. In addition to acting as a capsid-specific restriction factor, also acts as a pattern recognition receptor that activates innate immune signaling in response to the retroviral capsid lattice. Binding to the viral capsid triggers its E3 ubiquitin ligase activity, and in concert with the heterodimeric ubiquitin conjugating enzyme complex UBE2V1-UBE2N (also known as UBC13-UEV1A complex) generates 'Lys-63'-linked polyubiquitin chains, which in turn are catalysts in the autophosphorylation of the MAP3K7/TAK1 complex (includes TAK1, TAB2, and TAB3). Activation of the MAP3K7/TAK1 complex by autophosphorylation results in the induction and expression of NF-kappa-B and MAPK-responsive inflammatory genes, thereby leading to an innate immune response in the infected cell. Plays a role in regulating autophagy through activation of autophagy regulator BECN1 by causing its dissociation from its inhibitors BCL2 and TAB2. This Pygathrix nemaeus (Red-shanked douc langur) protein is Tripartite motif-containing protein 5 (TRIM5).